Reading from the N-terminus, the 271-residue chain is MPELPEVEVTRQGITPYLVDQTVVDLIVRNPSLRWPVPELAKQIIGQTIRQVRRRAKYLLIDTDAGTSIVHLGMSGSLRILPHDTPVEKHDHIDLVLANGRILRFNDPRRFGAWLWCQLPEEAHPLLEKLGPEPLTDAFNVNQLAASLAGKKKAIKLCLMDNHIVVGVGNIYANEALFAAGIHPEAEAGKIDIERLTVLVAEVKQILAHAIKQGGTTLKDFTNADGKPGYFAQKLHVYGRGGETCTQCGNLLSEIRLGQRTTVFCSICQPR.

The active-site Schiff-base intermediate with DNA is the Pro-2. Residue Glu-3 is the Proton donor of the active site. Lys-57 (proton donor; for beta-elimination activity) is an active-site residue. Residues His-90, Arg-109, and Lys-151 each coordinate DNA. The segment at 236 to 270 (HVYGRGGETCTQCGNLLSEIRLGQRTTVFCSICQP) adopts an FPG-type zinc-finger fold. Residue Arg-260 is the Proton donor; for delta-elimination activity of the active site.

This sequence belongs to the FPG family. As to quaternary structure, monomer. The cofactor is Zn(2+).

The enzyme catalyses Hydrolysis of DNA containing ring-opened 7-methylguanine residues, releasing 2,6-diamino-4-hydroxy-5-(N-methyl)formamidopyrimidine.. It catalyses the reaction 2'-deoxyribonucleotide-(2'-deoxyribose 5'-phosphate)-2'-deoxyribonucleotide-DNA = a 3'-end 2'-deoxyribonucleotide-(2,3-dehydro-2,3-deoxyribose 5'-phosphate)-DNA + a 5'-end 5'-phospho-2'-deoxyribonucleoside-DNA + H(+). Its function is as follows. Involved in base excision repair of DNA damaged by oxidation or by mutagenic agents. Acts as a DNA glycosylase that recognizes and removes damaged bases. Has a preference for oxidized purines, such as 7,8-dihydro-8-oxoguanine (8-oxoG). Has AP (apurinic/apyrimidinic) lyase activity and introduces nicks in the DNA strand. Cleaves the DNA backbone by beta-delta elimination to generate a single-strand break at the site of the removed base with both 3'- and 5'-phosphates. The polypeptide is Formamidopyrimidine-DNA glycosylase (Shewanella oneidensis (strain ATCC 700550 / JCM 31522 / CIP 106686 / LMG 19005 / NCIMB 14063 / MR-1)).